A 327-amino-acid polypeptide reads, in one-letter code: MQGKVALEEHFAIPETLQDSAGFVPGDYWKELQHRLLDIQDTRLKLMDAHGIETMILSLNAPAVQAIPDRRKAIEIARRANDVLAEECAKRPDRFLAFAALPLQDPDAATEELQRCVNDLGFVGALVNGFSQEGDGQTPLYYDLPQYRPFWGEVEKLDVPFYLHPRNPLPQDSRIYDGHPWLLGPTWAFAQETAVHALRLMASGLFDEHPRLNIILGHMGEGLPYMMWRIDHRNAWVKLPPRYPAKRRFMDYFNENFHITTSGNFRTQTLIDAILEIGADRILFSTDWPFENIDHASDWFNATSIAEADRVKIGRTNARRLFKLDGA.

Residues Glu-8 and His-10 each contribute to the Zn(2+) site. 2,6-dihydroxybenzoate-binding residues include Phe-23, His-164, and Asp-287. Positions 164 and 287 each coordinate Zn(2+). Residue Asp-287 is part of the active site.

It belongs to the metallo-dependent hydrolases superfamily. ACMSD family. Homotetramer. Dimer of dimers. The cofactor is Zn(2+).

It catalyses the reaction 2,6-dihydroxybenzoate + H(+) = resorcinol + CO2. The enzyme catalyses 2,3-dihydroxybenzoate + H(+) = catechol + CO2. It participates in aromatic compound metabolism. Inhibited by CuCl(2), monoiodoacetate and diethylpyrocarbonate. Inhibited by 2,3-dihydroxybenzaldehyde, which is an analog of the substrate 2,3-dihydroxybenzoate. Involved in the gamma-resorcylate (2,6-dihydroxybenzoate) catabolism. Catalyzes the reversible decarboxylation of gamma-resorcylate to resorcinol. The reaction is reversible, but equilibrium greatly favors the decarboxylation reaction. Also catalyzes the decarboxylation of 2,3-dihydroxybenzoate to catechol, but does not act on 2,4-dihydroxybenzoate, 2,5-dihydroxybenzoate, 3,4-dihydroxybenzoate, 3,5-dihydroxybenzoate, 2-hydroxybenzoate, or 3-hydroxybenzoate. Only resorcinol is carboxylated by the reverse reaction. In Rhizobium sp. (strain MTP-10005), this protein is Gamma-resorcylate decarboxylase.